The following is an 834-amino-acid chain: Mannosyl-oligosaccharide glucosidase (834 aa).

Positions 1-10 (MARGERRRRA) are enriched in basic residues. At 1-36 (MARGERRRRAAAAEGARPLERARGAGRRDGRAGGAR) the chain is on the cytoplasmic side. Residues 1–37 (MARGERRRRAAAAEGARPLERARGAGRRDGRAGGARG) are disordered. An Endoplasmic reticulum targeting motif is present at residues 3–9 (RGERRRR). Residues 17–31 (RPLERARGAGRRDGR) are compositionally biased toward basic and acidic residues. A helical; Signal-anchor for type II membrane protein transmembrane segment spans residues 37-57 (GSAGGAALAVVVLALAFGLSG). The Lumenal portion of the chain corresponds to 58–834 (RWVLAWLGVR…LVLLIMAEEY (777 aa)). Residues 74–136 (PAPSALPPDS…GTPPKLRHTC (63 aa)) are required for endoplasmic reticulum targeting. Asp580 functions as the Proton donor in the catalytic mechanism. Asn654 carries an N-linked (GlcNAc...) asparagine glycan. Glu804 (proton acceptor) is an active-site residue.

The protein belongs to the glycosyl hydrolase 63 family.

The protein localises to the endoplasmic reticulum membrane. It catalyses the reaction N(4)-(alpha-D-Glc-(1-&gt;2)-alpha-D-Glc-(1-&gt;3)-alpha-D-Glc-(1-&gt;3)-alpha-D-Man-(1-&gt;2)-alpha-D-Man-(1-&gt;2)-alpha-D-Man-(1-&gt;3)-[alpha-D-Man-(1-&gt;2)-alpha-D-Man-(1-&gt;3)-[alpha-D-Man-(1-&gt;2)-alpha-D-Man-(1-&gt;6)]-alpha-D-Man-(1-&gt;6)]-beta-D-Man-(1-&gt;4)-beta-D-GlcNAc-(1-&gt;4)-beta-D-GlcNAc)-L-asparaginyl-[protein] + H2O = N(4)-(alpha-D-Glc-(1-&gt;3)-alpha-D-Glc-(1-&gt;3)-alpha-D-Man-(1-&gt;2)-alpha-D-Man-(1-&gt;2)-alpha-D-Man-(1-&gt;3)-[alpha-D-Man-(1-&gt;2)-alpha-D-Man-(1-&gt;3)-[alpha-D-Man-(1-&gt;2)-alpha-D-Man-(1-&gt;6)]-alpha-D-Man-(1-&gt;6)]-beta-D-Man-(1-&gt;4)-beta-D-GlcNAc-(1-&gt;4)-beta-D-GlcNAc)-L-asparaginyl-[protein] + beta-D-glucose. It functions in the pathway glycan metabolism; N-glycan degradation. In the context of N-glycan degradation, cleaves the distal alpha 1,2-linked glucose residue from the Glc(3)Man(9)GlcNAc(2) oligosaccharide precursor in a highly specific manner. This chain is Mannosyl-oligosaccharide glucosidase, found in Rattus norvegicus (Rat).